The chain runs to 571 residues: Probable serine/threonine-protein kinase WNK4 (571 aa).

The 259-residue stretch at 19–277 folds into the Protein kinase domain; the sequence is GRFAEILGRG…AKELLQDPFL (259 aa). Residues 99-102 and lysine 149 contribute to the ATP site; that span reads TELF. The active-site Proton acceptor is aspartate 166. The segment at 396 to 425 is disordered; it reads EDDETPHDHHRHRTDSFHSSSSHASSSQAS. Over residues 412-425 the composition is skewed to low complexity; it reads FHSSSSHASSSQAS. Position 522 is a phosphoserine (serine 522).

This sequence belongs to the protein kinase superfamily. Ser/Thr protein kinase family. WNK subfamily.

It catalyses the reaction L-seryl-[protein] + ATP = O-phospho-L-seryl-[protein] + ADP + H(+). The enzyme catalyses L-threonyl-[protein] + ATP = O-phospho-L-threonyl-[protein] + ADP + H(+). Its function is as follows. May regulate flowering time by modulating the photoperiod pathway. The chain is Probable serine/threonine-protein kinase WNK4 (WNK4) from Arabidopsis thaliana (Mouse-ear cress).